We begin with the raw amino-acid sequence, 224 residues long: MMTNLFSVFDPSAIFNLSLNWLSTFLGLLMIPSIYWLMPSRYNIFWNSILLTLHKEFKTLLGPSGHNGSTFIFISLFSLILFNNFMGLFPYIFTSTSHLTLTLSLALPLWLCFMLYGWINHTQHMFAHLVPQGTPAILMPFMVCIETISNIIRPGTLAVRLTANMIAGHLLLTLLGNTGPSMSYLLVTFLLVAQIALLVLESAVTMIQSYVFAVLSTLYSSEVN.

The next 6 membrane-spanning stretches (helical) occupy residues 17 to 37 (LSLN…IYWL), 72 to 92 (IFIS…FPYI), 99 to 119 (LTLT…YGWI), 125 to 145 (MFAH…MVCI), 155 to 175 (GTLA…LTLL), and 184 to 204 (YLLV…ESAV).

Belongs to the ATPase A chain family. F-type ATPases have 2 components, CF(1) - the catalytic core - and CF(0) - the membrane proton channel. CF(1) has five subunits: alpha(3), beta(3), gamma(1), delta(1), epsilon(1). CF(0) has three main subunits: a, b and c.

Its subcellular location is the mitochondrion inner membrane. Functionally, mitochondrial membrane ATP synthase (F(1)F(0) ATP synthase or Complex V) produces ATP from ADP in the presence of a proton gradient across the membrane which is generated by electron transport complexes of the respiratory chain. F-type ATPases consist of two structural domains, F(1) - containing the extramembraneous catalytic core and F(0) - containing the membrane proton channel, linked together by a central stalk and a peripheral stalk. During catalysis, ATP synthesis in the catalytic domain of F(1) is coupled via a rotary mechanism of the central stalk subunits to proton translocation. Key component of the proton channel; it may play a direct role in the translocation of protons across the membrane. The protein is ATP synthase subunit a (mt:ATPase6) of Drosophila yakuba (Fruit fly).